The primary structure comprises 543 residues: MKTNYIFVTGGVVSSLGKGIAVASLAAILEARGLKVTIMKLDPYINVDPGTISPIQHGEVFVTEDGAETDLDLGHYERFIRTKMSRRNNFTTGRIYFDVLHKERRGDYLGATIQVIPHITNTIKQRIIECGEGHDVVLVEIGGTVGDIESLPFLEAIRQMAGEVGRDHTLYMHLTLVPYIKAAGEVKTKPTQHSVKELLSIGIQPDVLICRSDRAVPSNERAKIALFCNVSEKAVISLKDVDSIYKIPALLKSQYLDDYICERFSLKCPKANLSEWEQVIYQQANPVGEVTVGIVGKYIDLPDAYKSVIEALHHAGLKNRIAVNICLIHSQDVETRSVKILQDLDAILIPGGFGYRGVEGKIMTAQYAREKQIPYLGICLGMQVAIVEFARHVAGMPEANSTEFVSDCKYPVVALITEWYEENNNRKLSNLGGTMRLGSQPCKLTYGSLAYQIYGKTIIMERHRHRYEVNNMLLKQIEAAGLRVAGLSEDYKLVEMIEYPAHPWFIASQFHPEFNSTPRDGHPLFTGFIKAASEYQKKQLNKM.

An amidoligase domain region spans residues M1 to L266. S14 contributes to the CTP binding site. S14 lines the UTP pocket. Residues S15–I20 and D72 contribute to the ATP site. 2 residues coordinate Mg(2+): D72 and E140. CTP is bound by residues D147 to E149, K187 to Q192, and K223. UTP is bound by residues K187–Q192 and K223. K239–V241 lines the ATP pocket. A Glutamine amidotransferase type-1 domain is found at T291–K538. Position 352 (G352) interacts with L-glutamine. C379 functions as the Nucleophile; for glutamine hydrolysis in the catalytic mechanism. L-glutamine-binding positions include L380–Q383, E403, and R466. Residues H511 and E513 contribute to the active site.

The protein belongs to the CTP synthase family. In terms of assembly, homotetramer.

The catalysed reaction is UTP + L-glutamine + ATP + H2O = CTP + L-glutamate + ADP + phosphate + 2 H(+). The enzyme catalyses L-glutamine + H2O = L-glutamate + NH4(+). It carries out the reaction UTP + NH4(+) + ATP = CTP + ADP + phosphate + 2 H(+). It functions in the pathway pyrimidine metabolism; CTP biosynthesis via de novo pathway; CTP from UDP: step 2/2. With respect to regulation, allosterically activated by GTP, when glutamine is the substrate; GTP has no effect on the reaction when ammonia is the substrate. The allosteric effector GTP functions by stabilizing the protein conformation that binds the tetrahedral intermediate(s) formed during glutamine hydrolysis. Inhibited by the product CTP, via allosteric rather than competitive inhibition. Functionally, catalyzes the ATP-dependent amination of UTP to CTP with either L-glutamine or ammonia as the source of nitrogen. Regulates intracellular CTP levels through interactions with the four ribonucleotide triphosphates. The chain is CTP synthase from Baumannia cicadellinicola subsp. Homalodisca coagulata.